The primary structure comprises 388 residues: Cytochrome b (388 aa).

Transmembrane regions (helical) follow at residues Phe-38–Met-58, Trp-82–Phe-104, Val-119–Val-139, and Phe-185–Ala-205. Heme b contacts are provided by His-88 and His-102. The heme b site is built by His-189 and His-203. Residue His-208 participates in a ubiquinone binding. The next 4 membrane-spanning stretches (helical) occupy residues Phe-231–Phe-251, Ala-295–Lys-315, Ile-327–Cys-347, and Phe-354–Pro-373.

Belongs to the cytochrome b family. In terms of assembly, the main subunits of complex b-c1 are: cytochrome b, cytochrome c1 and the Rieske protein. Heme b serves as cofactor.

The protein localises to the mitochondrion inner membrane. In terms of biological role, component of the ubiquinol-cytochrome c reductase complex (complex III or cytochrome b-c1 complex) that is part of the mitochondrial respiratory chain. The b-c1 complex mediates electron transfer from ubiquinol to cytochrome c. Contributes to the generation of a proton gradient across the mitochondrial membrane that is then used for ATP synthesis. In Zea mays (Maize), this protein is Cytochrome b (MT-CYB).